A 227-amino-acid polypeptide reads, in one-letter code: Basic leucine zipper 24 (227 aa).

Positions 44-68 are disordered; it reads EDKDQDRVTRGCSHTHSCNPPGPED. In terms of domain architecture, bZIP spans 94–160; the sequence is DSSNKKRLCG…IRLRALLVEM (67 aa). The segment at 98 to 118 is basic motif; sequence KKRLCGNREAVRKYREKKKAR. The interval 122–129 is leucine-zipper; the sequence is LEDEVMRL.

As to quaternary structure, homodimer. As to expression, expressed in young leaves and cauline leaves.

The protein resides in the nucleus. It localises to the cytoplasm. Its function is as follows. Transcription factor involved in the regulation of salt stress response. Functions as a negative transcriptional regulator of salt stress acclimation response by regulating cation homeostasis. Negatively regulates the expression of genes contributing to ion and osmotic homeostasis during salt stress, such as the Na(+) transporter HKT1, the Na(+)/H(+) antiporter SOS1, the aquaporin PIP2-1 and the glutamine synthetase GLN1-3. In addition, targets genes with functions in plant growth and development, such as argonaute 4 (AGO4) and cyclophilin 19 (CYP19). The polypeptide is Basic leucine zipper 24 (Arabidopsis thaliana (Mouse-ear cress)).